Here is a 292-residue protein sequence, read N- to C-terminus: Ribonuclease HIII (292 aa).

The region spanning 76–292 (TNLIGTDEVG…TQKAMKIAQL (217 aa)) is the RNase H type-2 domain. Residues Asp82, Glu83, and Asp186 each contribute to the a divalent metal cation site.

Belongs to the RNase HII family. RnhC subfamily. Mn(2+) serves as cofactor. The cofactor is Mg(2+).

It localises to the cytoplasm. The catalysed reaction is Endonucleolytic cleavage to 5'-phosphomonoester.. In terms of biological role, endonuclease that specifically degrades the RNA of RNA-DNA hybrids. The protein is Ribonuclease HIII of Lactococcus lactis subsp. cremoris (strain SK11).